We begin with the raw amino-acid sequence, 147 residues long: Large ribosomal subunit protein uL22c (147 aa).

The protein belongs to the universal ribosomal protein uL22 family. Part of the 50S ribosomal subunit.

Its subcellular location is the plastid. This protein binds specifically to 23S rRNA. In terms of biological role, the globular domain of the protein is located near the polypeptide exit tunnel on the outside of the subunit, while an extended beta-hairpin is found that lines the wall of the exit tunnel in the center of the 70S ribosome. The polypeptide is Large ribosomal subunit protein uL22c (rpl22) (Cuscuta gronovii (Common dodder)).